The chain runs to 330 residues: MTSDLETQLQQLQTEAVAAITSADTLDALETLRVSYLGKKGQLSQILKGMGKLDASERPKIGGLANQVKEALQQGLEQKKSDLNQAAIAAQLAAETLDVTMPGTYIPQGHIHPLNSTIDKALDIFVGLGYTIAQGPEMETDYYNFEALNTPPDHPARDMQDTFYLPDGNLLRTHTSAVQIHYMEDHEPPIRIAAPGRCYRRDTEDATHAAVFHQIEILAVDKGLTFTDLKGTIKVFIEQMFGDVPIRFRASYFPFTEPSAEVDVQWKGRWLEVLGCGMVDPNVLKNVGYDPEVYTGFAAGFGVERFAMVLHQIDDIRRLYTSDLRFLRQF.

Glu257 lines the Mg(2+) pocket.

The protein belongs to the class-II aminoacyl-tRNA synthetase family. Phe-tRNA synthetase alpha subunit type 1 subfamily. Tetramer of two alpha and two beta subunits. It depends on Mg(2+) as a cofactor.

Its subcellular location is the cytoplasm. It carries out the reaction tRNA(Phe) + L-phenylalanine + ATP = L-phenylalanyl-tRNA(Phe) + AMP + diphosphate + H(+). The protein is Phenylalanine--tRNA ligase alpha subunit of Acaryochloris marina (strain MBIC 11017).